We begin with the raw amino-acid sequence, 201 residues long: Glutathione peroxidase 1 (201 aa).

Ser-32 bears the Phosphoserine mark. The active site involves Sec-47. Sec-47 is a non-standard amino acid (selenocysteine). Residues Lys-86, Lys-112, and Lys-146 each carry the N6-acetyllysine; alternate modification. An N6-succinyllysine; alternate mark is found at Lys-86, Lys-112, and Lys-146. Ser-195 and Ser-199 each carry phosphoserine.

This sequence belongs to the glutathione peroxidase family. In terms of assembly, homotetramer. Interacts with MIEN1. During periods of oxidative stress, Sec-47 may react with a superoxide radical, irreversibly lose hydroselenide and be converted to dehydroalanine.

The protein resides in the cytoplasm. It localises to the mitochondrion. The enzyme catalyses 2 glutathione + H2O2 = glutathione disulfide + 2 H2O. The catalysed reaction is a hydroperoxy polyunsaturated fatty acid + 2 glutathione = a hydroxy polyunsaturated fatty acid + glutathione disulfide + H2O. It catalyses the reaction tert-butyl hydroperoxide + 2 glutathione = tert-butanol + glutathione disulfide + H2O. It carries out the reaction cumene hydroperoxide + 2 glutathione = 2-phenylpropan-2-ol + glutathione disulfide + H2O. The enzyme catalyses (13S)-hydroperoxy-(9Z,11E)-octadecadienoate + 2 glutathione = (13S)-hydroxy-(9Z,11E)-octadecadienoate + glutathione disulfide + H2O. The catalysed reaction is (9S)-hydroperoxy-(10E,12Z)-octadecadienoate + 2 glutathione = (9S)-hydroxy-(10E,12Z)-octadecadienoate + glutathione disulfide + H2O. It catalyses the reaction (5S)-hydroperoxy-(6E,8Z,11Z,14Z)-eicosatetraenoate + 2 glutathione = (5S)-hydroxy-(6E,8Z,11Z,14Z)-eicosatetraenoate + glutathione disulfide + H2O. It carries out the reaction (12S)-hydroperoxy-(5Z,8Z,10E,14Z)-eicosatetraenoate + 2 glutathione = (12S)-hydroxy-(5Z,8Z,10E,14Z)-eicosatetraenoate + glutathione disulfide + H2O. The enzyme catalyses (12R)-hydroperoxy-(5Z,8Z,10E,14Z)-eicosatetraenoate + 2 glutathione = (12R)-hydroxy-(5Z,8Z,10E,14Z)-eicosatetraenoate + glutathione disulfide + H2O. The catalysed reaction is (15S)-hydroperoxy-(5Z,8Z,11Z,13E)-eicosatetraenoate + 2 glutathione = (15S)-hydroxy-(5Z,8Z,11Z,13E)-eicosatetraenoate + glutathione disulfide + H2O. It catalyses the reaction (5S)-hydroperoxy-(6E,8Z,11Z,14Z,17Z)-eicosapentaenoate + 2 glutathione = (5S)-hydroxy-(6E,8Z,11Z,14Z,17Z)-eicosapentaenoate + glutathione disulfide + H2O. It carries out the reaction (12S)-hydroperoxy-(5Z,8Z,10E,14Z,17Z)-eicosapentaenoate + 2 glutathione = (12S)-hydroxy-(5Z,8Z,10E,14Z,17Z)-eicosapentaenoate + glutathione disulfide + H2O. The enzyme catalyses (15S)-hydroperoxy-(5Z,8Z,11Z,13E,17Z)-eicosapentaenoate + 2 glutathione = (15S)-hydroxy-(5Z,8Z,11Z,13E,17Z)-eicosapentaenoate + glutathione disulfide + H2O. The catalysed reaction is (15S)-hydroperoxy-(11Z,13E)-eicosadienoate + 2 glutathione = (15S)-hydroxy-(11Z,13E)-eicosadienoate + glutathione disulfide + H2O. It catalyses the reaction (17S)-hydroperoxy-(4Z,7Z,10Z,13Z,15E,19Z)-docosahexaenoate + 2 glutathione = (17S)-hydroxy-(4Z,7Z,10Z,13Z,15E,19Z)-docosahexaenoate + glutathione disulfide + H2O. Catalyzes the reduction of hydroperoxides in a glutathione-dependent manner thus regulating cellular redox homeostasis. Can reduce small soluble hydroperoxides such as H2O2, cumene hydroperoxide and tert-butyl hydroperoxide, as well as several fatty acid-derived hydroperoxides. In platelets catalyzes the reduction of 12-hydroperoxyeicosatetraenoic acid, the primary product of the arachidonate 12-lipoxygenase pathway. The polypeptide is Glutathione peroxidase 1 (GPX1) (Callithrix jacchus (White-tufted-ear marmoset)).